Reading from the N-terminus, the 485-residue chain is Regulatory protein ViaA (485 aa).

It belongs to the ViaA family. Homodimer. Interacts with RavA.

The protein localises to the cytoplasm. Functionally, component of the RavA-ViaA chaperone complex, which may act on the membrane to optimize the function of some of the respiratory chains. ViaA stimulates the ATPase activity of RavA. In Proteus mirabilis (strain HI4320), this protein is Regulatory protein ViaA.